The primary structure comprises 364 residues: MEFEHRPVLLEPTVDALVLPDFGGKGAHRQAGEPGPDAATRLQHGVFVDGTFGRGGHSRALLARLGAQARLVVFDKDPQAIAVARELAAGDGRVEVVHGGFATMAEELTARGIEQVDGVMLDLGVSSPQIDDAERGFSFMRDGPLDMRMDTTRGPTVADWLAQASVDEMREVIADYGEERFAFQVAKAIAACRATRPLHTTLQLAECVAGAVRTREKGQHPATRTFQALRIYINRELEELARALASALDLLGPGGRLAVISFHSLEDRMVKQCIAAAARPAAAHARLPLRESELPQPLVRSLGKVVADDVEVAGNARARSAILRVAERTGEPLPPGGGAGFVKAGRVPGEPVRGTRAGSKGRRR.

S-adenosyl-L-methionine-binding positions include Gly55–His57, Asp75, Phe101, Asp122, and Gln129. The disordered stretch occupies residues Leu333 to Arg364.

Belongs to the methyltransferase superfamily. RsmH family.

It is found in the cytoplasm. It catalyses the reaction cytidine(1402) in 16S rRNA + S-adenosyl-L-methionine = N(4)-methylcytidine(1402) in 16S rRNA + S-adenosyl-L-homocysteine + H(+). In terms of biological role, specifically methylates the N4 position of cytidine in position 1402 (C1402) of 16S rRNA. This Bordetella bronchiseptica (strain ATCC BAA-588 / NCTC 13252 / RB50) (Alcaligenes bronchisepticus) protein is Ribosomal RNA small subunit methyltransferase H.